The following is a 261-amino-acid chain: Thiazole synthase (261 aa).

Lysine 95 functions as the Schiff-base intermediate with DXP in the catalytic mechanism. Residues glycine 156, 182 to 183, and 204 to 205 contribute to the 1-deoxy-D-xylulose 5-phosphate site; these read AG and NT.

It belongs to the ThiG family. As to quaternary structure, homotetramer. Forms heterodimers with either ThiH or ThiS.

It localises to the cytoplasm. It catalyses the reaction [ThiS sulfur-carrier protein]-C-terminal-Gly-aminoethanethioate + 2-iminoacetate + 1-deoxy-D-xylulose 5-phosphate = [ThiS sulfur-carrier protein]-C-terminal Gly-Gly + 2-[(2R,5Z)-2-carboxy-4-methylthiazol-5(2H)-ylidene]ethyl phosphate + 2 H2O + H(+). Its pathway is cofactor biosynthesis; thiamine diphosphate biosynthesis. Catalyzes the rearrangement of 1-deoxy-D-xylulose 5-phosphate (DXP) to produce the thiazole phosphate moiety of thiamine. Sulfur is provided by the thiocarboxylate moiety of the carrier protein ThiS. In vitro, sulfur can be provided by H(2)S. In Pectobacterium carotovorum subsp. carotovorum (strain PC1), this protein is Thiazole synthase.